The sequence spans 65 residues: Precursor peptide TigB (65 aa).

TIGSVS motif repeat units lie at residues Thr-16 to Ser-21, Thr-23 to Ser-28, Thr-33 to Ser-38, Thr-40 to Ser-45, Thr-47 to Ser-52, and Thr-54 to Ser-59. Methylcyclopropylglycine occurs at positions 17, 24, 34, 41, 48, and 55.

Is subject to maturation by TigE, that catalyzes the formation of methylcyclopropylglycine (mCPG) residues from isoleucine residues residing in the repeating TIGSVS motifs.

Functionally, precursor peptide which undergoes post-translational modifications by tailoring enzymes, leading to the mature natural product. The chain is Precursor peptide TigB from Paramaledivibacter caminithermalis (strain DSM 15212 / CIP 107654 / DViRD3) (Clostridium caminithermale).